Reading from the N-terminus, the 232-residue chain is Orotidine 5'-phosphate decarboxylase (232 aa).

Substrate-binding positions include Asp10, Lys32, 59-68 (DLKFHDIPNT), Thr119, Arg180, Gln189, Gly209, and Arg210. Catalysis depends on Lys61, which acts as the Proton donor.

Belongs to the OMP decarboxylase family. Type 1 subfamily. In terms of assembly, homodimer.

The catalysed reaction is orotidine 5'-phosphate + H(+) = UMP + CO2. The protein operates within pyrimidine metabolism; UMP biosynthesis via de novo pathway; UMP from orotate: step 2/2. In terms of biological role, catalyzes the decarboxylation of orotidine 5'-monophosphate (OMP) to uridine 5'-monophosphate (UMP). In Actinobacillus succinogenes (strain ATCC 55618 / DSM 22257 / CCUG 43843 / 130Z), this protein is Orotidine 5'-phosphate decarboxylase.